Consider the following 266-residue polypeptide: Ribosomal RNA small subunit methyltransferase J (266 aa).

Residues 109–110 (RD), 125–126 (ER), and D185 contribute to the S-adenosyl-L-methionine site.

Belongs to the methyltransferase superfamily. RsmJ family.

The protein localises to the cytoplasm. The catalysed reaction is guanosine(1516) in 16S rRNA + S-adenosyl-L-methionine = N(2)-methylguanosine(1516) in 16S rRNA + S-adenosyl-L-homocysteine + H(+). In terms of biological role, specifically methylates the guanosine in position 1516 of 16S rRNA. The polypeptide is Ribosomal RNA small subunit methyltransferase J (Cellvibrio japonicus (strain Ueda107) (Pseudomonas fluorescens subsp. cellulosa)).